A 400-amino-acid polypeptide reads, in one-letter code: Mannitol-1-phosphate 5-dehydrogenase (400 aa).

Position 12-23 (12-23 (AVHFGAGNIGRG)) interacts with NAD(+). K221 is a catalytic residue.

It belongs to the mannitol dehydrogenase family. As to quaternary structure, monomer.

The enzyme catalyses D-mannitol 1-phosphate + NAD(+) = beta-D-fructose 6-phosphate + NADH + H(+). Catalyzes the NAD(H)-dependent interconversion of D-fructose 6-phosphate and D-mannitol 1-phosphate in the mannitol metabolic pathway. This Pyricularia oryzae (strain Y34) (Rice blast fungus) protein is Mannitol-1-phosphate 5-dehydrogenase.